A 276-amino-acid chain; its full sequence is tRNA dimethylallyltransferase (276 aa).

Positions 9–12 (DSLS) are interaction with substrate tRNA.

The protein belongs to the IPP transferase family. As to quaternary structure, monomer. Mg(2+) serves as cofactor.

It carries out the reaction adenosine(37) in tRNA + dimethylallyl diphosphate = N(6)-dimethylallyladenosine(37) in tRNA + diphosphate. In terms of biological role, catalyzes the transfer of a dimethylallyl group onto the adenine at position 37 in tRNAs that read codons beginning with uridine, leading to the formation of N6-(dimethylallyl)adenosine (i(6)A). The protein is tRNA dimethylallyltransferase (miaA) of Helicobacter pylori (strain Shi470).